A 428-amino-acid polypeptide reads, in one-letter code: tRNA(Ile)-lysidine synthase (428 aa).

28–33 (SGGVDS) serves as a coordination point for ATP.

The protein belongs to the tRNA(Ile)-lysidine synthase family.

It is found in the cytoplasm. The catalysed reaction is cytidine(34) in tRNA(Ile2) + L-lysine + ATP = lysidine(34) in tRNA(Ile2) + AMP + diphosphate + H(+). Ligates lysine onto the cytidine present at position 34 of the AUA codon-specific tRNA(Ile) that contains the anticodon CAU, in an ATP-dependent manner. Cytidine is converted to lysidine, thus changing the amino acid specificity of the tRNA from methionine to isoleucine. In Streptococcus pyogenes serotype M3 (strain ATCC BAA-595 / MGAS315), this protein is tRNA(Ile)-lysidine synthase.